Consider the following 132-residue polypeptide: Large ribosomal subunit protein bL17 (132 aa).

It belongs to the bacterial ribosomal protein bL17 family. Part of the 50S ribosomal subunit. Contacts protein L32.

The chain is Large ribosomal subunit protein bL17 from Saccharophagus degradans (strain 2-40 / ATCC 43961 / DSM 17024).